Here is a 1849-residue protein sequence, read N- to C-terminus: NADH-ubiquinone oxidoreductase chain 5 (1849 aa).

A run of 41 helical transmembrane segments spans residues 76 to 93 (YLLLYYCIYALELYTVCY), 98 to 120 (LILLYLIQLNYILLTNIVGYLQY), 190 to 212 (YWLCVVIWNNIGWWTYQLMIIGW), 222 to 244 (LVPTILAIINLILTYIDLIIYLY), 279 to 301 (HLLTVIIPNYCLAIYNSGLILSS), 316 to 338 (LALQYLVAPLYISCSLLIYILCY), 358 to 380 (LEIIYLDILVNSLISIIILILSV), 390 to 412 (VIILSQYINIISGYVAMPTTILI), 419 to 441 (IAVYIYYLVDYIATISTLIIWLL), 483 to 505 (LLDAIMNVVTSVILLITVSCLGV), 510 to 532 (LFIAVYPVYCIGVLLLNTLLQVV), 536 to 558 (ISYIIGTFMNAIILICDIYVYSI), 565 to 587 (LIMYVYFVAAIILEPIIDIIHTI), 621 to 640 (IWLIADLILAYIDLIRSTLV), 683 to 705 (WVRFLIYCAGNNINLLVLLYVQF), 718 to 740 (LTRIQLYATIPVIISSYIYQGIL), 745 to 767 (IISYYNTLLVATLEFIQIWLTIL), 797 to 819 (PTWVLFECLSTCVGLVELYLVTV), 868 to 890 (ILLLMSSGLQSTVLNTIFDLLSL), 905 to 927 (LTVQVCTIPAALYSTIIYPYIVL), 966 to 988 (LYSYNLYLLELYNIYYFWLSLLE), 1008 to 1030 (PDLLISLISYIIDICILSLELLL), 1073 to 1095 (LTVVFYILNLCGILNEISIQILF), 1105 to 1127 (LATIYCTVVLPYILIILEILSYL), 1172 to 1194 (TYLLYIVLEQLLLVIIDLYIYII), 1219 to 1241 (VYFLYFMIFIGYLLCGIFAFFYH), 1248 to 1270 (GIFYLSEMIIMGILIFSIVTLYY), 1296 to 1318 (IITFDILSILGVLLVATLTAIIL), 1330 to 1352 (FAYNVLATLVLFSASIICFIVSY), 1357 to 1379 (MIIFWEISGTLSLFLIDMYYARI), 1418 to 1440 (LFALLPYAQFNLSILGNLIFDFT), 1444 to 1466 (VIVFSIFSAAACKCAQFLLFVWL), 1478 to 1500 (ALIHSSTLVVMGIFMILRFAPIL), 1504 to 1526 (VYTLYIMSILGSLTVAYGAILAT), 1533 to 1555 (KAVAYSTISQIGYLFTGCAFLAF), 1559 to 1581 (LIYLILHAICKALLFVLVGYIVH), 1602 to 1624 (IAIYMFILCMVLAGAPYTVGFFA), 1639 to 1661 (VATFIICCWIISFACTPFYLYRI), 1719 to 1741 (LLHLLLLLIVLFCGEFLVFLVTG), 1773 to 1795 (VRNIQLLIIVLFALVTLYITAIN), and 1802 to 1824 (IIYLSVVLPILAIIFICLGHYFL).

This sequence belongs to the complex I subunit 5 family.

It is found in the hydrogenosome membrane. The catalysed reaction is a ubiquinone + NADH + 5 H(+)(in) = a ubiquinol + NAD(+) + 4 H(+)(out). This chain is NADH-ubiquinone oxidoreductase chain 5 (nad5), found in Nyctotherus ovalis.